A 636-amino-acid chain; its full sequence is Signal recognition particle receptor subunit alpha (636 aa).

Disordered stretches follow at residues Ala-132–Lys-205, Ile-217–Val-246, and Ile-280–Thr-314. Basic and acidic residues-rich tracts occupy residues Lys-137–Lys-146 and Ile-153–Lys-165. Ser-177 is subject to Phosphoserine. A compositionally biased stretch (basic and acidic residues) spans Ile-217–Glu-238. Thr-283 carries the post-translational modification Phosphothreonine. Phosphoserine occurs at positions 295, 296, and 297. Residues Ala-302–Lys-312 show a composition bias toward polar residues. Thr-303 is subject to Phosphothreonine. An NG domain region spans residues Tyr-417 to Met-634. Residues Gly-423 to Ser-430 and Asp-518 to Arg-522 each bind GTP. Thr-576 bears the Phosphothreonine mark. Thr-586 to Asp-589 provides a ligand contact to GTP.

This sequence belongs to the GTP-binding SRP family. In terms of assembly, heterodimer with SRPRB. Interacts with the signal recognition particle (SRP) complex subunit SRP54.

It localises to the endoplasmic reticulum membrane. Component of the SRP (signal recognition particle) receptor. Ensures, in conjunction with the signal recognition particle, the correct targeting of the nascent secretory proteins to the endoplasmic reticulum membrane system. Forms a guanosine 5'-triphosphate (GTP)-dependent complex with the SRP subunit SRP54. SRP receptor compaction and GTPase rearrangement drive SRP-mediated cotranslational protein translocation into the ER. The chain is Signal recognition particle receptor subunit alpha from Mus musculus (Mouse).